Consider the following 181-residue polypeptide: Cytochrome c oxidase subunit 2 (181 aa).

Cu cation is bound by residues cysteine 126, glutamate 128, cysteine 130, histidine 134, and methionine 137. Glutamate 128 serves as a coordination point for Mg(2+).

Belongs to the cytochrome c oxidase subunit 2 family. Component of the cytochrome c oxidase (complex IV, CIV), a multisubunit enzyme composed of a catalytic core of 3 subunits and several supernumerary subunits. The complex exists as a monomer or a dimer and forms supercomplexes (SCs) in the inner mitochondrial membrane with ubiquinol-cytochrome c oxidoreductase (cytochrome b-c1 complex, complex III, CIII). The cofactor is Cu cation.

The protein localises to the mitochondrion inner membrane. The catalysed reaction is 4 Fe(II)-[cytochrome c] + O2 + 8 H(+)(in) = 4 Fe(III)-[cytochrome c] + 2 H2O + 4 H(+)(out). Component of the cytochrome c oxidase, the last enzyme in the mitochondrial electron transport chain which drives oxidative phosphorylation. The respiratory chain contains 3 multisubunit complexes succinate dehydrogenase (complex II, CII), ubiquinol-cytochrome c oxidoreductase (cytochrome b-c1 complex, complex III, CIII) and cytochrome c oxidase (complex IV, CIV), that cooperate to transfer electrons derived from NADH and succinate to molecular oxygen, creating an electrochemical gradient over the inner membrane that drives transmembrane transport and the ATP synthase. Cytochrome c oxidase is the component of the respiratory chain that catalyzes the reduction of oxygen to water. Electrons originating from reduced cytochrome c in the intermembrane space (IMS) are transferred via the dinuclear copper A center (CU(A)) of subunit 2 and heme A of subunit 1 to the active site in subunit 1, a binuclear center (BNC) formed by heme A3 and copper B (CU(B)). The BNC reduces molecular oxygen to 2 water molecules using 4 electrons from cytochrome c in the IMS and 4 protons from the mitochondrial matrix. The protein is Cytochrome c oxidase subunit 2 (COII) of Paramecium primaurelia.